The chain runs to 342 residues: Palmitoyltransferase PFA4 (342 aa).

Residues 1-8 (MITFSNPW) are Cytoplasmic-facing. A helical transmembrane segment spans residues 9–29 (IGVIIPCIIIFTLSTFSAIYI). At 30-38 (LPHHVSNNE) the chain is on the lumenal side. Residues 39–59 (LTLFICASAMVWISYIIAIIV) traverse the membrane as a helical segment. Over 60 to 124 (PPGSPPKNYT…GHRNMPHFMR (65 aa)) the chain is Cytoplasmic. Positions 77–127 (MYCLKCKAYKPERTHHSKALGVCVLKMDHHCPWTNNTVGHRNMPHFMRFLV) constitute a DHHC domain. Cys107 acts as the S-palmitoyl cysteine intermediate in catalysis. The chain crosses the membrane as a helical span at residues 125-145 (FLVWVDMTVGYLFIRLCIRIM). Topologically, residues 146–162 (KLWRDKHLPSYLFDKTE) are lumenal. The chain crosses the membrane as a helical span at residues 163 to 183 (VILSIVFLPASFFVLFTVGIL). Over 184 to 342 (TIRVFVNMCN…ADFGVEHTDI (159 aa)) the chain is Cytoplasmic.

It belongs to the DHHC palmitoyltransferase family. PFA4 subfamily.

It localises to the endoplasmic reticulum membrane. It catalyses the reaction L-cysteinyl-[protein] + hexadecanoyl-CoA = S-hexadecanoyl-L-cysteinyl-[protein] + CoA. In terms of biological role, mediates the reversible addition of palmitate to target proteins, thereby regulating their membrane association and biological function. In Yarrowia lipolytica (strain CLIB 122 / E 150) (Yeast), this protein is Palmitoyltransferase PFA4.